A 467-amino-acid polypeptide reads, in one-letter code: Light-independent protochlorophyllide reductase subunit N (467 aa).

Residues Cys23, Cys48, and Cys108 each coordinate [4Fe-4S] cluster.

This sequence belongs to the BchN/ChlN family. Protochlorophyllide reductase is composed of three subunits; ChlL, ChlN and ChlB. Forms a heterotetramer of two ChlB and two ChlN subunits. Requires [4Fe-4S] cluster as cofactor.

The enzyme catalyses chlorophyllide a + oxidized 2[4Fe-4S]-[ferredoxin] + 2 ADP + 2 phosphate = protochlorophyllide a + reduced 2[4Fe-4S]-[ferredoxin] + 2 ATP + 2 H2O. It participates in porphyrin-containing compound metabolism; chlorophyll biosynthesis (light-independent). In terms of biological role, component of the dark-operative protochlorophyllide reductase (DPOR) that uses Mg-ATP and reduced ferredoxin to reduce ring D of protochlorophyllide (Pchlide) to form chlorophyllide a (Chlide). This reaction is light-independent. The NB-protein (ChlN-ChlB) is the catalytic component of the complex. The sequence is that of Light-independent protochlorophyllide reductase subunit N from Nostoc sp. (strain PCC 7120 / SAG 25.82 / UTEX 2576).